Reading from the N-terminus, the 774-residue chain is 5-methyltetrahydropteroyltriglutamate--homocysteine methyltransferase (774 aa).

Residues 23–26 and lysine 123 contribute to the 5-methyltetrahydropteroyltri-L-glutamate site; that span reads RELK. L-homocysteine contacts are provided by residues 446 to 448 and glutamate 499; that span reads IGS. L-methionine contacts are provided by residues 446-448 and glutamate 499; that span reads IGS. 5-methyltetrahydropteroyltri-L-glutamate contacts are provided by residues 530–531 and tryptophan 576; that span reads RC. Position 614 (aspartate 614) interacts with L-homocysteine. Aspartate 614 contributes to the L-methionine binding site. Glutamate 620 is a 5-methyltetrahydropteroyltri-L-glutamate binding site. The Zn(2+) site is built by histidine 656, cysteine 658, and glutamate 680. Histidine 709 (proton donor) is an active-site residue. Position 741 (cysteine 741) interacts with Zn(2+).

The protein belongs to the vitamin-B12 independent methionine synthase family. It depends on Zn(2+) as a cofactor.

The enzyme catalyses 5-methyltetrahydropteroyltri-L-glutamate + L-homocysteine = tetrahydropteroyltri-L-glutamate + L-methionine. The protein operates within amino-acid biosynthesis; L-methionine biosynthesis via de novo pathway; L-methionine from L-homocysteine (MetE route): step 1/1. Functionally, catalyzes the transfer of a methyl group from 5-methyltetrahydrofolate to homocysteine resulting in methionine formation. This is 5-methyltetrahydropteroyltriglutamate--homocysteine methyltransferase from Aliivibrio fischeri (strain MJ11) (Vibrio fischeri).